Here is a 329-residue protein sequence, read N- to C-terminus: tRNA-modifying protein YgfZ (329 aa).

The folate site is built by W32 and W190.

It belongs to the tRNA-modifying YgfZ family.

It is found in the cytoplasm. Its function is as follows. Folate-binding protein involved in regulating the level of ATP-DnaA and in the modification of some tRNAs. It is probably a key factor in regulatory networks that act via tRNA modification, such as initiation of chromosomal replication. In Photobacterium profundum (strain SS9), this protein is tRNA-modifying protein YgfZ.